We begin with the raw amino-acid sequence, 190 residues long: MSKIYIDERSDAEIVCAAIKNIGIEGATAAQLTRQLNMEKREVNKALYDLQRSAMVYSSDDIPPRWFMTTEADKPDADAMADVIIDDVSREKSMREDHKSFDDVIPAKKIIDWKDANPVTIINEYCQITKRDWSFRIESVGPSNSPTFYACVDIDGRVFDKADGKSKRDAKNNAAKLAVDKLLGYVIIRF.

One can recognise a Z-binding domain in the interval 5 to 70 (YIDERSDAEI…DIPPRWFMTT (66 aa)). Residues 117–184 (NPVTIINEYC…AKLAVDKLLG (68 aa)) form the DRBM domain.

This sequence belongs to the orthopoxvirus OPG065 family. As to quaternary structure, interacts with host G1P2/ISG15. Interacts with host EIF2AK2/PKR. Interacts with host ZBP1.

Its function is as follows. RNA-binding protein that plays a role in the inhibition of multiple cellular antiviral responses activated by double-stranded RNA (dsRNA), such as inhibition of PKR activation, necroptosis, and IFN-mediated antiviral activities. Recognizes and binds Z-RNA structures via its Z-binding domain and dsRNA via its DRBM domain: RNA-binding activity is required to escape host ZBP1-dependent necroptosis. Mechanistically, the Z-binding domain binds Z-RNAs that are produced during vaccinia virus infection, thereby competing with Z-RNA detection by host ZBP1, suppressing ZBP1-dependent necroptosis. Acts as a key inhibitor of the interferon response by blocking the phosphorylation and subsequent activation of IRF3 and IRF7 kinases that are required for interferon-alpha gene expression. Inhibits NF-kappa-B activation and the ubiquitin-like protein ISG15, which is an early antiviral protein. The binding with host ISG15 subsequently blocks host ISGylation. The sequence is that of RNA-binding protein OPG065 (OPG065) from Homo sapiens (Human).